The primary structure comprises 633 residues: Protein CASP (633 aa).

At 1–601 (MAVASEALLQ…LLFSRATRGL (601 aa)) the chain is on the cytoplasmic side. Residues 39–60 (QKTSLDERKELSSKTKEFRKQP) form a disordered region. 2 coiled-coil regions span residues 111 to 339 (IEAA…LANK) and 369 to 433 (SLES…VDVE). The helical; Anchor for type IV membrane protein transmembrane segment at 602–622 (FFMYLILLHLFIMIVLLKLGI) threads the bilayer. The Lumenal segment spans residues 623 to 633 (AGNTAYTPMNY).

This sequence belongs to the CASP family.

Its subcellular location is the golgi apparatus membrane. Its function is as follows. May be involved in intra-Golgi transport. This is Protein CASP (coy1) from Schizosaccharomyces pombe (strain 972 / ATCC 24843) (Fission yeast).